The primary structure comprises 527 residues: Putative ABC transporter peptide-binding protein BMEII0859 (527 aa).

The first 23 residues, Met-1 to Ala-23, serve as a signal peptide directing secretion.

This sequence belongs to the bacterial solute-binding protein 5 family. In terms of assembly, the complex is composed of two ATP-binding proteins (BMEII0863 and BMEII0864), two transmembrane proteins (BMEII0860 and BMEII0861) and a solute-binding protein (BMEII0859).

The protein localises to the periplasm. Functionally, probably part of an ABC transporter complex that could be involved in peptide import. The polypeptide is Putative ABC transporter peptide-binding protein BMEII0859 (Brucella melitensis biotype 1 (strain ATCC 23456 / CCUG 17765 / NCTC 10094 / 16M)).